A 423-amino-acid chain; its full sequence is Imidazolonepropionase (423 aa).

His-78 and His-80 together coordinate Fe(3+). Residues His-78 and His-80 each coordinate Zn(2+). Residues Arg-87, Tyr-150, and His-183 each coordinate 4-imidazolone-5-propanoate. Tyr-150 is an N-formimidoyl-L-glutamate binding site. Fe(3+) is bound at residue His-247. His-247 contributes to the Zn(2+) binding site. Residue Glu-250 participates in 4-imidazolone-5-propanoate binding. Residue Asp-322 participates in Fe(3+) binding. Asp-322 contacts Zn(2+). N-formimidoyl-L-glutamate is bound by residues Asn-324 and Gly-326. Position 327 (Ser-327) interacts with 4-imidazolone-5-propanoate.

It belongs to the metallo-dependent hydrolases superfamily. HutI family. The cofactor is Zn(2+). Fe(3+) serves as cofactor.

The protein localises to the cytoplasm. It catalyses the reaction 4-imidazolone-5-propanoate + H2O = N-formimidoyl-L-glutamate. It functions in the pathway amino-acid degradation; L-histidine degradation into L-glutamate; N-formimidoyl-L-glutamate from L-histidine: step 3/3. In terms of biological role, catalyzes the hydrolytic cleavage of the carbon-nitrogen bond in imidazolone-5-propanoate to yield N-formimidoyl-L-glutamate. It is the third step in the universal histidine degradation pathway. This is Imidazolonepropionase from Bacillus cereus (strain ATCC 10987 / NRS 248).